Reading from the N-terminus, the 76-residue chain is Acyl carrier protein (76 aa).

Positions Met-1–Gln-76 constitute a Carrier domain. Ser-36 is subject to O-(pantetheine 4'-phosphoryl)serine.

It belongs to the acyl carrier protein (ACP) family. In terms of processing, 4'-phosphopantetheine is transferred from CoA to a specific serine of apo-ACP by AcpS. This modification is essential for activity because fatty acids are bound in thioester linkage to the sulfhydryl of the prosthetic group.

The protein resides in the cytoplasm. It participates in lipid metabolism; fatty acid biosynthesis. In terms of biological role, carrier of the growing fatty acid chain in fatty acid biosynthesis. The sequence is that of Acyl carrier protein from Mannheimia succiniciproducens (strain KCTC 0769BP / MBEL55E).